The sequence spans 397 residues: Phosphoglycerate kinase (397 aa).

Substrate is bound by residues 21–23, Arg-36, 59–62, Arg-119, and Arg-152; these read DVN and HFGR. Residues Lys-202, Glu-324, and 354–357 contribute to the ATP site; that span reads GGDT.

Belongs to the phosphoglycerate kinase family. Monomer.

It is found in the cytoplasm. It catalyses the reaction (2R)-3-phosphoglycerate + ATP = (2R)-3-phospho-glyceroyl phosphate + ADP. Its pathway is carbohydrate degradation; glycolysis; pyruvate from D-glyceraldehyde 3-phosphate: step 2/5. This is Phosphoglycerate kinase from Cereibacter sphaeroides (strain ATCC 17029 / ATH 2.4.9) (Rhodobacter sphaeroides).